The primary structure comprises 215 residues: UPF0502 protein Ping_1905 (215 aa).

It belongs to the UPF0502 family.

The sequence is that of UPF0502 protein Ping_1905 from Psychromonas ingrahamii (strain DSM 17664 / CCUG 51855 / 37).